Consider the following 323-residue polypeptide: Fructose-1,6-bisphosphatase class 1 (323 aa).

Mg(2+) is bound by residues Glu84, Asp103, Leu105, and Asp106. Substrate-binding positions include 106-109 (DGSS), Asn198, and Lys264. A Mg(2+)-binding site is contributed by Glu270.

Belongs to the FBPase class 1 family. Homotetramer. Mg(2+) serves as cofactor.

It is found in the cytoplasm. It carries out the reaction beta-D-fructose 1,6-bisphosphate + H2O = beta-D-fructose 6-phosphate + phosphate. Its pathway is carbohydrate biosynthesis; gluconeogenesis. In Hydrogenovibrio crunogenus (strain DSM 25203 / XCL-2) (Thiomicrospira crunogena), this protein is Fructose-1,6-bisphosphatase class 1.